A 458-amino-acid chain; its full sequence is UDP-N-acetylmuramate--L-alanine ligase (458 aa).

112–118 (GTHGKTT) provides a ligand contact to ATP.

The protein belongs to the MurCDEF family.

Its subcellular location is the cytoplasm. The enzyme catalyses UDP-N-acetyl-alpha-D-muramate + L-alanine + ATP = UDP-N-acetyl-alpha-D-muramoyl-L-alanine + ADP + phosphate + H(+). It functions in the pathway cell wall biogenesis; peptidoglycan biosynthesis. Cell wall formation. This is UDP-N-acetylmuramate--L-alanine ligase from Syntrophotalea carbinolica (strain DSM 2380 / NBRC 103641 / GraBd1) (Pelobacter carbinolicus).